The primary structure comprises 414 residues: F-box protein At3g47030 (414 aa).

A disordered region spans residues 1–24; that stretch reads MSGMLGLSAVMGKRPKQQVTARPR. Positions 28–77 constitute an F-box domain; that stretch reads IEKPEEIPDDLLIDVFSRLSIEDVARCRCLSRFWSSILRRRYFTELFHKM.

The polypeptide is F-box protein At3g47030 (Arabidopsis thaliana (Mouse-ear cress)).